We begin with the raw amino-acid sequence, 64 residues long: Translational regulator CsrA (64 aa).

Belongs to the CsrA/RsmA family. Homodimer; the beta-strands of each monomer intercalate to form a hydrophobic core, while the alpha-helices form wings that extend away from the core.

The protein resides in the cytoplasm. Functionally, a key translational regulator that binds mRNA to regulate translation initiation and/or mRNA stability. Mediates global changes in gene expression, shifting from rapid growth to stress survival by linking envelope stress, the stringent response and the catabolite repression systems. Usually binds in the 5'-UTR; binding at or near the Shine-Dalgarno sequence prevents ribosome-binding, repressing translation, binding elsewhere in the 5'-UTR can activate translation and/or stabilize the mRNA. Its function is antagonized by small RNA(s). This Dichelobacter nodosus (strain VCS1703A) protein is Translational regulator CsrA.